A 528-amino-acid polypeptide reads, in one-letter code: UDP-glucuronosyltransferase 1A9 (528 aa).

An N-terminal signal peptide occupies residues 1–23 (MAPVAFPTSFFLCLLLASGLAQA). N-linked (GlcNAc...) asparagine glycosylation is present at Asn69. The residue at position 97 (Lys97) is an N6-succinyllysine. Asn290 and Asn428 each carry an N-linked (GlcNAc...) asparagine glycan. A helical transmembrane segment spans residues 486 to 506 (VIGFLLAIVLTVVFIVFKCCA).

It belongs to the UDP-glycosyltransferase family. Homodimer. Homooligomer. Interacts with UGT1A1, UGT1A3, UGT1A4, UGT1A6, UGT1A7, UGT1A8 and UGT1A10 to form heterodimers. As to expression, highly expressed in liver and at lower levels in stomach and kidney.

It is found in the endoplasmic reticulum membrane. It carries out the reaction glucuronate acceptor + UDP-alpha-D-glucuronate = acceptor beta-D-glucuronoside + UDP + H(+). It catalyses the reaction 2-hydroxy-17beta-estradiol + UDP-alpha-D-glucuronate = 2-hydroxy-17beta-estradiol 3-O-(beta-D-glucuronate) + UDP + H(+). The catalysed reaction is 4-hydroxy-17beta-estradiol + UDP-alpha-D-glucuronate = 17beta-estradiol 4-O-(beta-D-glucuronate) + UDP + H(+). The enzyme catalyses 2-hydroxyestrone + UDP-alpha-D-glucuronate = 2-hydroxyestrone 3-O-(beta-D-glucuronate) + UDP + H(+). It carries out the reaction 4-hydroxyestrone + UDP-alpha-D-glucuronate = estrone 4-O-(beta-D-glucuronate) + UDP + H(+). It catalyses the reaction prunetin + UDP-alpha-D-glucuronate = prunetin-5-O-beta-D-glucuronide + UDP. The catalysed reaction is 8-iso-prostaglandin F2alpha + UDP-alpha-D-glucuronate = 8-iso-prostaglandin F2alpha-glucuronide + UDP + H(+). The enzyme catalyses 5-epi-5-F2t-IsoP + UDP-alpha-D-glucuronate = 5-epi-5-F2t-IsoP-glucuronide + UDP + H(+). It carries out the reaction (5Z,8Z,11Z,14Z)-eicosatetraenoate + UDP-alpha-D-glucuronate = O-[(5Z),(8Z),(11Z),(14Z)-eicosatetraenoyl]-beta-D-glucuronate + UDP. It catalyses the reaction 15-hydroxy-(5Z,8Z,11Z,13E)-eicosatetraenoate + UDP-alpha-D-glucuronate = 15-O-(beta-D-glucuronosyl)-(5Z,8Z,11Z,14Z)-eicosatetraenoate + UDP + H(+). The catalysed reaction is prostaglandin B1 + UDP-alpha-D-glucuronate = 15-O-(beta-D-glucuronosyl)-prostaglandin B1 + UDP + H(+). The enzyme catalyses (E)-ferulate + UDP-alpha-D-glucuronate = (E)-4-O-(beta-D-glucuronosyl)-ferulate + UDP + H(+). It carries out the reaction (E)-ferulate + UDP-alpha-D-glucuronate = (E)-ferulic acid beta-D-glucuronate ester + UDP. It catalyses the reaction candesartan + UDP-alpha-D-glucuronate = candesartan O-beta-D-glucuronoside + UDP. The catalysed reaction is SN-38 + UDP-alpha-D-glucuronate = SN-38 O-beta-D-glucuronide + UDP + H(+). The enzyme catalyses mycophenolate + UDP-alpha-D-glucuronate = mycophenolate 7-O-beta-D-glucuronide + UDP + H(+). Its function is as follows. UDP-glucuronosyltransferase (UGT) that catalyzes phase II biotransformation reactions in which lipophilic substrates are conjugated with glucuronic acid to increase the metabolite's water solubility, thereby facilitating excretion into either the urine or bile. Essential for the elimination and detoxification of drugs, xenobiotics and endogenous compounds. Catalyzes the glucuronidation of endogenous estrogen hormones such as estradiol and estrone. Involved in the glucuronidation of arachidonic acid (AA) and AA-derived eicosanoids including 15-HETE, PGB1 and F2-isoprostanes (8-iso-PGF2alpha and 5-epi-5-F2t-IsoP). Glucuronates the phytochemical ferulic acid efficently at both the phenolic or the carboxylic acid group. Also catalyzes the glucuronidation of the isoflavones genistein, daidzein, glycitein, formononetin, biochanin A and prunetin, which are phytoestrogens with anticancer and cardiovascular properties. Involved in the glucuronidation of the AGTR1 angiotensin receptor antagonist caderastan, a drug which can inhibit the effect of angiotensin II. Involved in the biotransformation of 7-ethyl-10-hydroxycamptothecin (SN-38), the pharmacologically active metabolite of the anticancer drug irinotecan. Also metabolizes mycophenolate, an immunosuppressive agent. This chain is UDP-glucuronosyltransferase 1A9, found in Mus musculus (Mouse).